A 222-amino-acid polypeptide reads, in one-letter code: Pyridoxine/pyridoxamine 5'-phosphate oxidase (222 aa).

Substrate-binding positions include 11-14 and Lys79; that span reads RVEY. Residues 74–79, 89–90, Lys96, and Gln118 contribute to the FMN site; these read RTVLCK and YT. Residues Tyr136, Arg140, and Ser144 each contribute to the substrate site. Residues 153–154 and Trp199 each bind FMN; that span reads QS. Residue 205 to 207 participates in substrate binding; it reads RVH. An FMN-binding site is contributed by Arg209.

This sequence belongs to the pyridoxamine 5'-phosphate oxidase family. In terms of assembly, homodimer. Requires FMN as cofactor.

The catalysed reaction is pyridoxamine 5'-phosphate + O2 + H2O = pyridoxal 5'-phosphate + H2O2 + NH4(+). It carries out the reaction pyridoxine 5'-phosphate + O2 = pyridoxal 5'-phosphate + H2O2. It functions in the pathway cofactor metabolism; pyridoxal 5'-phosphate salvage; pyridoxal 5'-phosphate from pyridoxamine 5'-phosphate: step 1/1. The protein operates within cofactor metabolism; pyridoxal 5'-phosphate salvage; pyridoxal 5'-phosphate from pyridoxine 5'-phosphate: step 1/1. In terms of biological role, catalyzes the oxidation of either pyridoxine 5'-phosphate (PNP) or pyridoxamine 5'-phosphate (PMP) into pyridoxal 5'-phosphate (PLP). The chain is Pyridoxine/pyridoxamine 5'-phosphate oxidase from Mycolicibacterium vanbaalenii (strain DSM 7251 / JCM 13017 / BCRC 16820 / KCTC 9966 / NRRL B-24157 / PYR-1) (Mycobacterium vanbaalenii).